We begin with the raw amino-acid sequence, 372 residues long: uncharacterized protein (372 aa).

The signal sequence occupies residues 1 to 33 (MVRRALRLAAGTASLAAGTWLLRALHGTPAALG).

To K.pneumoniae RomA.

This is an uncharacterized protein from Mycobacterium bovis (strain ATCC BAA-935 / AF2122/97).